Reading from the N-terminus, the 413-residue chain is Cis,cis-muconate transport protein (413 aa).

Topologically, residues 1–16 are cytoplasmic; sequence MYSNNQRSRIGSHTWK. Residues 17-37 form a helical membrane-spanning segment; the sequence is IAFLFAFLALLVDGADLMLLS. The Periplasmic portion of the chain corresponds to 38 to 53; the sequence is YSLNSIKAEFNLSTVE. A helical transmembrane segment spans residues 54–74; that stretch reads AGMLGSFTLAGMAIGGIFGGW. Topologically, residues 75–85 are cytoplasmic; that stretch reads ACDRFGRVRIV. The chain crosses the membrane as a helical span at residues 86 to 106; the sequence is VISILTFSILTCGLGLTQSFI. Residues 107 to 112 are Periplasmic-facing; sequence QFGVLR. Residues 113–133 form a helical membrane-spanning segment; that stretch reads FFASLGLGSLYIACNTLMAEY. The Cytoplasmic segment spans residues 134–145; it reads VPTKYRTTVLGT. The chain crosses the membrane as a helical span at residues 146-166; the sequence is LQAGWTVGYIVATLLAGWLIP. At 167–171 the chain is on the periplasmic side; it reads DHGWR. The chain crosses the membrane as a helical span at residues 172-192; the sequence is VLFYVAIIPVLMAVLMHFFVP. At 193–228 the chain is on the cytoplasmic side; it reads EPAAWQQSRLAPSKQTETVKTSAFKLIFQDKRNRNM. A helical transmembrane segment spans residues 229-249; sequence FILWALTAGFLQFGYYGVNNW. The Periplasmic portion of the chain corresponds to 250 to 266; sequence MPSYLESELGMKFKEMT. The helical transmembrane segment at 267–287 threads the bilayer; that stretch reads AYMVGTYTAMILGKILAGFMA. The Cytoplasmic portion of the chain corresponds to 288–293; sequence DKLGRR. A helical transmembrane segment spans residues 294-314; it reads FTYAFGAIGTAIFLPLIVFYN. The Periplasmic segment spans residues 315 to 318; sequence SPDN. A helical membrane pass occupies residues 319–339; it reads ILYLLVIFGFLYGIPYGVNAT. Over 340–352 the chain is Cytoplasmic; the sequence is YMTESFPTAIRGT. Residues 353 to 376 form a helical membrane-spanning segment; the sequence is AIGGAYNVGRLGAAIAPATIGFLA. At 377–382 the chain is on the periplasmic side; that stretch reads SGGSIG. The helical transmembrane segment at 383 to 403 threads the bilayer; it reads LGFVVMGAAYFICGVIPALFI. Residues 404–413 lie on the Cytoplasmic side of the membrane; sequence KEKQYDPQQS.

This sequence belongs to the major facilitator superfamily. Aromatic acid:H(+) symporter (AAHS) (TC 2.A.1.15) family.

The protein localises to the cell inner membrane. In terms of biological role, probable uptake of muconate. The polypeptide is Cis,cis-muconate transport protein (mucK) (Acinetobacter baylyi (strain ATCC 33305 / BD413 / ADP1)).